Reading from the N-terminus, the 376-residue chain is Alanine racemase 1 (376 aa).

Catalysis depends on Lys40, which acts as the Proton acceptor; specific for D-alanine. Lys40 is modified (N6-(pyridoxal phosphate)lysine). Residue Arg138 participates in substrate binding. Residue Tyr268 is the Proton acceptor; specific for L-alanine of the active site. Residue Met316 participates in substrate binding.

Belongs to the alanine racemase family. Pyridoxal 5'-phosphate serves as cofactor.

The enzyme catalyses L-alanine = D-alanine. It functions in the pathway amino-acid biosynthesis; D-alanine biosynthesis; D-alanine from L-alanine: step 1/1. Its function is as follows. Catalyzes the interconversion of L-alanine and D-alanine. May also act on other amino acids. The polypeptide is Alanine racemase 1 (alr1) (Oceanobacillus iheyensis (strain DSM 14371 / CIP 107618 / JCM 11309 / KCTC 3954 / HTE831)).